The chain runs to 419 residues: Carboxypeptidase A2 (419 aa).

An N-terminal signal peptide occupies residues 1–18 (MAMRLILFFGALFGHIYC). Residues 19-114 (LETFVGDQVL…EMLFNRRRER (96 aa)) constitute a propeptide, activation peptide. The 293-residue stretch at 122–414 (AYHTLEEISQ…LGLKAIMEHV (293 aa)) folds into the Peptidase M14 domain. Zn(2+)-binding residues include His-179 and Glu-182. Substrate contacts are provided by residues 179–182 (HARE), Arg-237, and 254–255 (NR). Cysteines 248 and 271 form a disulfide. A Zn(2+)-binding site is contributed by His-306. Residue 307-308 (SY) coordinates substrate. Cys-320 and Cys-354 are joined by a disulfide. Tyr-358 is a binding site for substrate. The Proton donor/acceptor role is filled by Glu-380.

This sequence belongs to the peptidase M14 family. Requires Zn(2+) as cofactor.

Its subcellular location is the secreted. It carries out the reaction Similar to that of carboxypeptidase A (EC 3.4.17.1), but with a preference for bulkier C-terminal residues.. Its function is as follows. Carboxypeptidase that catalyzes the release of a C-terminal amino acid, with a preference for large aromatic C-terminal residues. The protein is Carboxypeptidase A2 (CPA2) of Homo sapiens (Human).